The primary structure comprises 242 residues: Small ribosomal subunit protein uS2 (242 aa).

It belongs to the universal ribosomal protein uS2 family.

In Photobacterium profundum (strain SS9), this protein is Small ribosomal subunit protein uS2.